The following is a 62-amino-acid chain: MTIAFQSAVFALIAISFLLVIGVPVALASPDGWSSSKNVVFSGVSLWIGSVLFVGILNSFIS.

Helical transmembrane passes span 8-28 (AVFA…VALA) and 41-61 (FSGV…NSFI).

Belongs to the PsbZ family. PSII is composed of 1 copy each of membrane proteins PsbA, PsbB, PsbC, PsbD, PsbE, PsbF, PsbH, PsbI, PsbJ, PsbK, PsbL, PsbM, PsbT, PsbY, PsbZ, Psb30/Ycf12, at least 3 peripheral proteins of the oxygen-evolving complex and a large number of cofactors. It forms dimeric complexes.

It localises to the plastid. The protein resides in the chloroplast thylakoid membrane. May control the interaction of photosystem II (PSII) cores with the light-harvesting antenna, regulates electron flow through the 2 photosystem reaction centers. PSII is a light-driven water plastoquinone oxidoreductase, using light energy to abstract electrons from H(2)O, generating a proton gradient subsequently used for ATP formation. The sequence is that of Photosystem II reaction center protein Z from Pinus thunbergii (Japanese black pine).